The following is an 86-amino-acid chain: Small ribosomal subunit protein uS17 (86 aa).

It belongs to the universal ribosomal protein uS17 family. Part of the 30S ribosomal subunit.

Functionally, one of the primary rRNA binding proteins, it binds specifically to the 5'-end of 16S ribosomal RNA. This chain is Small ribosomal subunit protein uS17, found in Lactococcus lactis subsp. cremoris (strain SK11).